Consider the following 83-residue polypeptide: Translational regulator CsrA (83 aa).

Belongs to the CsrA/RsmA family. Homodimer; the beta-strands of each monomer intercalate to form a hydrophobic core, while the alpha-helices form wings that extend away from the core.

The protein resides in the cytoplasm. Functionally, a translational regulator that binds mRNA to regulate translation initiation and/or mRNA stability. Usually binds in the 5'-UTR at or near the Shine-Dalgarno sequence preventing ribosome-binding, thus repressing translation. Its main target seems to be the major flagellin gene, while its function is anatagonized by FliW. The sequence is that of Translational regulator CsrA from Thermotoga petrophila (strain ATCC BAA-488 / DSM 13995 / JCM 10881 / RKU-1).